The sequence spans 498 residues: POU domain protein 2, isoform A (498 aa).

The span at 1–30 (MMVLQQQQQQRLWDATTTSNTNTQTQQSAN) shows a compositional bias: low complexity. Residues 1 to 35 (MMVLQQQQQQRLWDATTTSNTNTQTQQSANVESTP) are disordered. Phosphoserine is present on residues serine 72, serine 211, serine 215, serine 217, and serine 219. The segment at 191 to 273 (QMKQQQREDP…STPKPTSGLT (83 aa)) is disordered. Residues 207–222 (PLAKSPLRSPSLSPVP) show a composition bias toward low complexity. Residues 228-251 (QQRTPPNSMTANSLGMSSAVMTPN) are compositionally biased toward polar residues. Positions 252-270 (TPSMQQQPQLQQSTPKPTS) are enriched in low complexity. One can recognise a POU-specific domain in the interval 286–360 (EETTDLEELE…LLQKWLEDAD (75 aa)). Residues 391–450 (RRKKRTSIETTVRTTLEKAFLMNCKPTSEEISQLSERLNMDKEVIRVWFCNRRQKEKRIN) constitute a DNA-binding region (homeobox).

It belongs to the POU transcription factor family. Class-2 subfamily. Initial expression in cellular blastoderm stage, then in ectodermal stripes during germband extension. Broad expression in the neuroectoderm followed by limitation to discrete subsets of CNS cells, and expression in specific PNS neurons and support cells.

Its subcellular location is the nucleus. Its function is as follows. DNA-binding regulatory protein implicated in early development. Involved in neuronal cell fate decision. May act as an octamer-dependent activator of transcription. Could also play an early role in specific ectodermal cells, and a subsequent role in the embryonic nervous system. In Drosophila melanogaster (Fruit fly), this protein is POU domain protein 2, isoform A (pdm2).